A 239-amino-acid polypeptide reads, in one-letter code: Hexuronic acid methyltransferase AglP (239 aa).

Belongs to the FkbM methyltransferase family.

It localises to the cytoplasm. The protein operates within cell surface structure biogenesis; S-layer biogenesis. Functionally, involved in the assembly of a N-linked pentasaccharide that decorates the S-layer glycoprotein and flagellins. S-adenosyl-L-methionine-dependent methyltransferase that modifies the hexuronic acid found at position 4 of the pentasaccharide. The protein is Hexuronic acid methyltransferase AglP (aglP) of Haloferax volcanii (strain ATCC 29605 / DSM 3757 / JCM 8879 / NBRC 14742 / NCIMB 2012 / VKM B-1768 / DS2) (Halobacterium volcanii).